Here is a 207-residue protein sequence, read N- to C-terminus: Ras-related protein Rab-2A (207 aa).

12 to 20 contributes to the GTP binding site; the sequence is GDTGVGKSC. The Effector region signature appears at 34 to 42; it reads HDLTIGVEF. GTP-binding positions include 60–64, 118–121, and 148–150; these read DTAGQ, NKSD, and SAK. Residues 187-207 form a disordered region; it reads GAPTSKQDGTDQKPAGGGCCK. 2 S-geranylgeranyl cysteine lipidation sites follow: C205 and C206.

This sequence belongs to the small GTPase superfamily. Rab family.

The protein localises to the cell membrane. It catalyses the reaction GTP + H2O = GDP + phosphate + H(+). With respect to regulation, regulated by guanine nucleotide exchange factors (GEFs) which promote the exchange of bound GDP for free GTP, GTPase activating proteins (GAPs) which increase the GTP hydrolysis activity, and GDP dissociation inhibitors which inhibit the dissociation of the nucleotide from the GTPase. Functionally, the small GTPases Rab are key regulators of intracellular membrane trafficking, from the formation of transport vesicles to their fusion with membranes. Rabs cycle between active GTP-bound and inactive GDP-bound states. In their active state, drive transport of vesicular carriers from donor organelles to acceptor organelles to regulate the membrane traffic that maintains organelle identity and morphology. The polypeptide is Ras-related protein Rab-2A (rab2A) (Dictyostelium discoideum (Social amoeba)).